Consider the following 189-residue polypeptide: Putative zinc finger protein ORF189 (189 aa).

Residues 114–137 (YVCPYCVSRFPTVRALKIHLKRRH) form a C2H2-type zinc finger.

The protein is Putative zinc finger protein ORF189 of Acidianus two-tailed virus (ATV).